The following is a 113-amino-acid chain: UPF0482 protein YnfB (113 aa).

Positions 1 to 28 (MNYTLSKRLCLTAMLTLAAVVYTTSAFA) are cleaved as a signal peptide.

It belongs to the UPF0482 family.

This is UPF0482 protein YnfB from Salmonella arizonae (strain ATCC BAA-731 / CDC346-86 / RSK2980).